Consider the following 428-residue polypeptide: Kynureninase (428 aa).

Pyridoxal 5'-phosphate-binding positions include Thr104, Thr105, 132 to 135, Asp213, His216, and Tyr238; that span reads FPSD. The residue at position 239 (Lys239) is an N6-(pyridoxal phosphate)lysine. Residues Trp267 and Thr295 each contribute to the pyridoxal 5'-phosphate site.

The protein belongs to the kynureninase family. As to quaternary structure, homodimer. Requires pyridoxal 5'-phosphate as cofactor.

It catalyses the reaction L-kynurenine + H2O = anthranilate + L-alanine + H(+). The catalysed reaction is 3-hydroxy-L-kynurenine + H2O = 3-hydroxyanthranilate + L-alanine + H(+). The protein operates within amino-acid degradation; L-kynurenine degradation; L-alanine and anthranilate from L-kynurenine: step 1/1. It participates in cofactor biosynthesis; NAD(+) biosynthesis; quinolinate from L-kynurenine: step 2/3. Functionally, catalyzes the cleavage of L-kynurenine (L-Kyn) and L-3-hydroxykynurenine (L-3OHKyn) into anthranilic acid (AA) and 3-hydroxyanthranilic acid (3-OHAA), respectively. The sequence is that of Kynureninase from Bacillus cereus (strain ATCC 14579 / DSM 31 / CCUG 7414 / JCM 2152 / NBRC 15305 / NCIMB 9373 / NCTC 2599 / NRRL B-3711).